The chain runs to 193 residues: MKLENFKVIPEYPEYLISPYGEVYSTKSNKLLTHHLGSAGYPFVTFYEQGKNVSIVLHRLLARVFKDLPSLESELEVDHKDRNKLNFSLDNLVVMTKQDHRIKTTVERGHTIGGNKCPYCNKQINSSSKTCFDCKPKSSPDITAEQIEYWVINYSWVKASKELGLSDNGLRKRYKSLTGKDPKSIKKKVSQVG.

Functionally, endonuclease that cleaves only one strand of asymmetric DNA substrates thereby introducing interruptions into the template or coding strand. In Escherichia phage T5 (Enterobacteria phage T5), this protein is H-N-H endonuclease F-TflII.